The sequence spans 392 residues: MSMPTIRAVRALTVRGGGADYHDQDAGHWIDDHIATPMSRYPEYRQSRQSFGINVLGTLVIEVEASDGTVGFAVTTGGEIGAFIVERHLARFIEGQRVTDIEKMWDQMFHATLYYGRKGVVLNAISGVDLALWDLLAKVRREPVHQLLGGKVRDELEFYATGARPDLAKEMGFIGGKLPLHHGPAEGEAGLRRNLDALADMRSRVGADFWLMLDCWMSLDVPYATRLAHEAHALGLKWIEECLPPDDYWGYAKLRRDVPRGMLVTTGEHEATRWGFRMLLEMECCDIIQPDVGWCGGLTELMRISALADARGVLVIPHGSSVYSYHFVTTRHNSPFAEFLMMAPQADRVVPMFDPLLLDEPVPVGGRMKVPDTPGFGVRLNPDVRMQRPYEH.

Residues His22 and Arg48 each contribute to the substrate site. Residues Asp214, Glu240, and Glu268 each coordinate Mg(2+). His318 serves as the catalytic Proton acceptor. Glu338 contributes to the substrate binding site.

Belongs to the mandelate racemase/muconate lactonizing enzyme family. RhamD subfamily. Homooctamer; tetramer of dimers. Mg(2+) serves as cofactor.

The catalysed reaction is L-rhamnonate = 2-dehydro-3-deoxy-L-rhamnonate + H2O. Functionally, catalyzes the dehydration of L-rhamnonate to 2-keto-3-deoxy-L-rhamnonate (KDR). This Burkholderia cenocepacia (strain HI2424) protein is L-rhamnonate dehydratase.